A 450-amino-acid polypeptide reads, in one-letter code: tRNA-2-methylthio-N(6)-dimethylallyladenosine synthase (450 aa).

In terms of domain architecture, MTTase N-terminal spans 14–132 (GEFFIETWGC…FPNYLNEVKK (119 aa)). Cys-23, Cys-59, Cys-93, Cys-169, Cys-173, and Cys-176 together coordinate [4Fe-4S] cluster. Residues 155–385 (RKNSMKAFVT…VEVVNEISAK (231 aa)) form the Radical SAM core domain. Residues 388-450 (KAYEGKIEEV…NSFSLTGEEI (63 aa)) form the TRAM domain.

Belongs to the methylthiotransferase family. MiaB subfamily. In terms of assembly, monomer. [4Fe-4S] cluster is required as a cofactor.

It is found in the cytoplasm. The enzyme catalyses N(6)-dimethylallyladenosine(37) in tRNA + (sulfur carrier)-SH + AH2 + 2 S-adenosyl-L-methionine = 2-methylsulfanyl-N(6)-dimethylallyladenosine(37) in tRNA + (sulfur carrier)-H + 5'-deoxyadenosine + L-methionine + A + S-adenosyl-L-homocysteine + 2 H(+). Its function is as follows. Catalyzes the methylthiolation of N6-(dimethylallyl)adenosine (i(6)A), leading to the formation of 2-methylthio-N6-(dimethylallyl)adenosine (ms(2)i(6)A) at position 37 in tRNAs that read codons beginning with uridine. The chain is tRNA-2-methylthio-N(6)-dimethylallyladenosine synthase from Clostridium botulinum (strain Loch Maree / Type A3).